Consider the following 409-residue polypeptide: Argininosuccinate synthase (409 aa).

ATP contacts are provided by residues 15–23 (AYSGGLDTS) and Ala-42. Residues Tyr-93 and Ser-98 each coordinate L-citrulline. ATP is bound at residue Gly-123. The L-aspartate site is built by Thr-125, Asn-129, and Asp-130. Asn-129 is an L-citrulline binding site. Residues Arg-133, Ser-182, Ser-191, Glu-267, and Tyr-279 each coordinate L-citrulline.

It belongs to the argininosuccinate synthase family. Type 1 subfamily. In terms of assembly, homotetramer.

Its subcellular location is the cytoplasm. The enzyme catalyses L-citrulline + L-aspartate + ATP = 2-(N(omega)-L-arginino)succinate + AMP + diphosphate + H(+). It participates in amino-acid biosynthesis; L-arginine biosynthesis; L-arginine from L-ornithine and carbamoyl phosphate: step 2/3. The sequence is that of Argininosuccinate synthase from Desulfitobacterium hafniense (strain Y51).